The chain runs to 102 residues: Large ribosomal subunit protein eL21 (102 aa).

A compositionally biased stretch (basic residues) spans 1 to 21; the sequence is MVRRSKGFRSRTRKKLRKKPR. A disordered region spans residues 1 to 33; it reads MVRRSKGFRSRTRKKLRKKPRERGLSPLGPMTQ.

This sequence belongs to the eukaryotic ribosomal protein eL21 family.

This chain is Large ribosomal subunit protein eL21, found in Methanopyrus kandleri (strain AV19 / DSM 6324 / JCM 9639 / NBRC 100938).